The sequence spans 766 residues: Ubiquitin carboxyl-terminal hydrolase creB (766 aa).

The tract at residues 1–32 (MGSFLKSFRKDVGSAAPSVGAPPAKKEPQPLP) is disordered. Residues 13–23 (GSAAPSVGAPP) are compositionally biased toward low complexity. The USP domain occupies 55–466 (YGMENFGNTC…CAYVLFYQET (412 aa)). Cys-64 serves as the catalytic Nucleophile. 2 disordered regions span residues 115-145 (EALA…KDSP) and 243-266 (ESPQ…SRTP). A compositionally biased stretch (low complexity) spans 249–263 (SDVSDSVIPSSSSGS). The active-site Proton acceptor is His-417. Residues 526-752 (APTAPQLSTH…HDRSSHGKWR (227 aa)) are disordered. Over residues 548–572 (SPAPDPAPLTSLPPIPPIPETPPAP) the composition is skewed to pro residues. Residues 573–620 (LTSRKSDLQSKKERVKEEKERKAAEKEKEKQRRKEIETRLKDRQRRED) are a coiled coil. 2 stretches are compositionally biased toward basic and acidic residues: residues 576 to 643 (RKSD…RNHA) and 734 to 747 (EQEH…DRSS).

Belongs to the peptidase C19 family. As to quaternary structure, interacts with creA, creC and qutD.

It carries out the reaction Thiol-dependent hydrolysis of ester, thioester, amide, peptide and isopeptide bonds formed by the C-terminal Gly of ubiquitin (a 76-residue protein attached to proteins as an intracellular targeting signal).. Its function is as follows. Ubiquitin thioesterase component of the regulatory network controlling carbon source utilization through ubiquitination and deubiquitination involving creA, creB, creC, creD and acrB. Deubiquitinates the creA catabolic repressor and the quinate permease qutD. Also plays a role in response to carbon starvation and the control of extracellular proteases activity. The chain is Ubiquitin carboxyl-terminal hydrolase creB (creB) from Emericella nidulans (strain FGSC A4 / ATCC 38163 / CBS 112.46 / NRRL 194 / M139) (Aspergillus nidulans).